The primary structure comprises 436 residues: Succinyl-CoA:glutarate CoA-transferase (436 aa).

Residues 1-8 constitute a mitochondrion transit peptide; the sequence is MLWMLARA. The active-site Nucleophile is aspartate 203. N6-acetyllysine is present on residues lysine 392 and lysine 423.

This sequence belongs to the CoA-transferase III family.

Its subcellular location is the mitochondrion. It carries out the reaction glutarate + succinyl-CoA = glutaryl-CoA + succinate. The catalysed reaction is 3-hydroxy-3-methylglutarate + succinyl-CoA = (3S)-3-hydroxy-3-methylglutaryl-CoA + succinate. It catalyses the reaction 3-hydroxy-3-methylglutarate + glutaryl-CoA = (3S)-3-hydroxy-3-methylglutaryl-CoA + glutarate. The enzyme catalyses hexanedioate + glutaryl-CoA = hexanedioyl-CoA + glutarate. It carries out the reaction itaconate + glutaryl-CoA = itaconyl-CoA + glutarate. The catalysed reaction is itaconate + succinyl-CoA = itaconyl-CoA + succinate. Functionally, coenzyme A (CoA) transferase that reversibly catalyzes the transfer of a CoA moiety from a dicarboxyl-CoA to a dicarboxylate in a metabolite recycling process. Displays preference for succinyl-CoA and glutarate-CoA as dicarboxyl-CoA donors and glutarate, succinate, adipate/hexanedioate, itaconate and 3-hydroxy-3-methylglutarate as dicarboxylate acceptors. Acts on intermediates or end products of lysine and tryptophan degradation pathway, in particular catalyzes succinyl-CoA-dependent reesterification of free glutarate into glutaryl-CoA to prevent renal excretion of glutarate. Upon inflammation, may convert macrophage-derived itaconate to itaconyl-CoA in erythroid precursors where it negatively regulates the TCA cycle and heme synthesis to limit erythroid differentiation in the context of stress erythropoiesis. This chain is Succinyl-CoA:glutarate CoA-transferase, found in Mus musculus (Mouse).